Reading from the N-terminus, the 399-residue chain is Acetylornithine aminotransferase (399 aa).

Residues glycine 102–alanine 103 and phenylalanine 135 each bind pyridoxal 5'-phosphate. Arginine 138 is a binding site for N(2)-acetyl-L-ornithine. Residue aspartate 220–glutamine 223 coordinates pyridoxal 5'-phosphate. Lysine 249 is subject to N6-(pyridoxal phosphate)lysine. Serine 277 is a N(2)-acetyl-L-ornithine binding site. Threonine 278 is a binding site for pyridoxal 5'-phosphate.

This sequence belongs to the class-III pyridoxal-phosphate-dependent aminotransferase family. ArgD subfamily. In terms of assembly, homodimer. Pyridoxal 5'-phosphate serves as cofactor.

Its subcellular location is the cytoplasm. It catalyses the reaction N(2)-acetyl-L-ornithine + 2-oxoglutarate = N-acetyl-L-glutamate 5-semialdehyde + L-glutamate. It participates in amino-acid biosynthesis; L-arginine biosynthesis; N(2)-acetyl-L-ornithine from L-glutamate: step 4/4. This is Acetylornithine aminotransferase from Oceanobacillus iheyensis (strain DSM 14371 / CIP 107618 / JCM 11309 / KCTC 3954 / HTE831).